Reading from the N-terminus, the 266-residue chain is Integral membrane protein 2B (266 aa).

Residues 1-54 (MVKVTFNSALAQKEAKKDESKSGEEALIIPPDAVAVDCKDPDEVVPVGQRRAWC) lie on the Cytoplasmic side of the membrane. The helical; Signal-anchor for type II membrane protein transmembrane segment at 55 to 75 (WCMCFGLAFMLAGVILGGAYL) threads the bilayer. The Lumenal portion of the chain corresponds to 76-266 (YKYFAFQPDD…RFAVETLICP (191 aa)). The segment at 102 to 134 (EPSADAPASRYQTIEENIKIFEEDEVEFISVPV) is necessary for interaction with APP and inhibitor effects on APP processing. The region spanning 137 to 231 (FADSDPANIV…LCHDKETYKL (95 aa)) is the BRICHOS domain. 2 disulfide bridges follow: Cys164/Cys223 and Cys248/Cys265. N-linked (GlcNAc...) asparagine glycosylation is present at Asn170.

This sequence belongs to the ITM2 family. Homodimer; disulfide-linked. Interacts with SPPL2A and SPPL2B. Interacts with APP. Mature BRI2 (mBRI2) interacts with the APP amyloid-beta A4 protein; the interaction occurs at the cell surface and in the endocytic compartments and enable alpha- and beta-secretase-induced APP cleavage inhibition. Mature BRI2 (mBRI2) interacts with the APP C99; the interaction occurs in the endocytic compartments and enable gamma-secretase-induced C99 cleavage inhibition. May form heterodimers with Bri23 peptide and APP amyloid-beta protein 40. Interacts with ADAM7 in sperm; the interaction increases following capacitation. In terms of processing, the ectodomain C-terminal part of the imBRI2 is processed by furin producing a secreted Bri23 peptide and a mature BRI2, membrane form (mBRI2). The remaining part of the ectodomain of mBRI2 containing the BRICHOS domain is cleaved by ADAM10 and is secreted (BRI2C, soluble form). The membrane-bound N-terminal fragment (BRI2C, membrane form) is further proteolytically processed by SPPL2A and SPPL2B through regulated intramembrane proteolysis producing a secreted C-peptide and a BRI2 intracellular domain (BRI2 ICD) released in the cytosol. Shedding by ADAM10 facilitates intramembrane cleavage but is not absolutely required for BRI2 ICD generation. Post-translationally, glycosylation at Asn-170 is important for cell surface localization, but doesn't affect furin- and ADAM10-induced proteolytic processing.

It localises to the golgi apparatus membrane. The protein resides in the cell membrane. The protein localises to the endosome membrane. Its subcellular location is the secreted. Plays a regulatory role in the processing of the amyloid-beta A4 precursor protein (APP) and acts as an inhibitor of the amyloid-beta peptide aggregation and fibrils deposition. Plays a role in the induction of neurite outgrowth. Functions as a protease inhibitor by blocking access of secretases to APP cleavage sites. Its function is as follows. Mature BRI2 (mBRI2) functions as a modulator of the amyloid-beta A4 precursor protein (APP) processing leading to a strong reduction in the secretion of secretase-processed amyloid-beta protein 40 and amyloid-beta protein 42. Functionally, bri23 peptide prevents aggregation of APP amyloid-beta protein 42 into toxic oligomers. The sequence is that of Integral membrane protein 2B (ITM2B) from Bos taurus (Bovine).